Reading from the N-terminus, the 122-residue chain is Large ribosomal subunit protein uL14 (122 aa).

This sequence belongs to the universal ribosomal protein uL14 family. Part of the 50S ribosomal subunit. Forms a cluster with proteins L3 and L19. In the 70S ribosome, L14 and L19 interact and together make contacts with the 16S rRNA in bridges B5 and B8.

Its function is as follows. Binds to 23S rRNA. Forms part of two intersubunit bridges in the 70S ribosome. The polypeptide is Large ribosomal subunit protein uL14 (Lactobacillus gasseri (strain ATCC 33323 / DSM 20243 / BCRC 14619 / CIP 102991 / JCM 1131 / KCTC 3163 / NCIMB 11718 / NCTC 13722 / AM63)).